We begin with the raw amino-acid sequence, 126 residues long: Protein ApaG (126 aa).

One can recognise an ApaG domain in the interval 2–126 (SALDDSIRVE…FRLALPGLLH (125 aa)).

This is Protein ApaG from Shewanella sp. (strain MR-4).